Here is a 201-residue protein sequence, read N- to C-terminus: Small ribosomal subunit protein uS4c (201 aa).

The interval 20–44 is disordered; the sequence is GLTSKRPRAGSDLRNQSRSGKKSQY. In terms of domain architecture, S4 RNA-binding spans 89–152; sequence MRLDNILFRL…NSRTLVQNLL (64 aa).

This sequence belongs to the universal ribosomal protein uS4 family. Part of the 30S ribosomal subunit. Contacts protein S5. The interaction surface between S4 and S5 is involved in control of translational fidelity.

The protein resides in the plastid. It localises to the chloroplast. Functionally, one of the primary rRNA binding proteins, it binds directly to 16S rRNA where it nucleates assembly of the body of the 30S subunit. Its function is as follows. With S5 and S12 plays an important role in translational accuracy. The chain is Small ribosomal subunit protein uS4c (rps4) from Aethionema cordifolium (Lebanon stonecress).